Consider the following 240-residue polypeptide: Glutathione S-transferase omega-1 (240 aa).

Ser2 is modified (N-acetylserine). The 80-residue stretch at 22–101 folds into the GST N-terminal domain; that stretch reads GQIRVYSMRF…YLDEAYPEKK (80 aa). Residue Cys32 is the Nucleophile of the active site. The residue at position 57 (Lys57) is an N6-acetyllysine. Residues Lys59, Val72, and 85–86 each bind glutathione; that span reads ES. The GST C-terminal domain maps to 106-227; it reads DPYKKARQKM…AKTYREYLNL (122 aa). At Ser129 the chain carries Phosphoserine. Lys152 is modified (N6-acetyllysine).

Belongs to the GST superfamily. Omega family. As to quaternary structure, homodimer.

It localises to the cytoplasm. The protein localises to the cytosol. It catalyses the reaction RX + glutathione = an S-substituted glutathione + a halide anion + H(+). The enzyme catalyses L-dehydroascorbate + 2 glutathione = glutathione disulfide + L-ascorbate. The catalysed reaction is methylarsonate + 2 glutathione + H(+) = methylarsonous acid + glutathione disulfide + H2O. Its function is as follows. Exhibits glutathione-dependent thiol transferase and dehydroascorbate reductase activities. Has S-(phenacyl)glutathione reductase activity. Also has glutathione S-transferase activity. Participates in the biotransformation of inorganic arsenic and reduces monomethylarsonic acid (MMA) and dimethylarsonic acid. In Mus musculus (Mouse), this protein is Glutathione S-transferase omega-1 (Gsto1).